A 133-amino-acid polypeptide reads, in one-letter code: UPF0768 protein C977.18 (133 aa).

It belongs to the UPF0768 family.

This chain is UPF0768 protein C977.18, found in Schizosaccharomyces pombe (strain 972 / ATCC 24843) (Fission yeast).